The following is a 126-amino-acid chain: Holo-[acyl-carrier-protein] synthase (126 aa).

The Mg(2+) site is built by Asp-8 and Glu-57.

Belongs to the P-Pant transferase superfamily. AcpS family. Mg(2+) is required as a cofactor.

Its subcellular location is the cytoplasm. The catalysed reaction is apo-[ACP] + CoA = holo-[ACP] + adenosine 3',5'-bisphosphate + H(+). Transfers the 4'-phosphopantetheine moiety from coenzyme A to a Ser of acyl-carrier-protein. The protein is Holo-[acyl-carrier-protein] synthase of Trichlorobacter lovleyi (strain ATCC BAA-1151 / DSM 17278 / SZ) (Geobacter lovleyi).